A 159-amino-acid chain; its full sequence is MNKQISKKPAQRTIALNKKALHDYYVEQRFEAGLVLEGWEVKSIRAGRVQLRDSYVVFKGGEAWLIGAHLSPLPNVAEYMKADPQRSRKLLLNKREIGKLFGAVQKQGLTVVPLDLHWHKNHVKVEIALAKGKKTHDKRETIKRREWEREKHRVLKSHG.

This sequence belongs to the SmpB family.

It is found in the cytoplasm. Required for rescue of stalled ribosomes mediated by trans-translation. Binds to transfer-messenger RNA (tmRNA), required for stable association of tmRNA with ribosomes. tmRNA and SmpB together mimic tRNA shape, replacing the anticodon stem-loop with SmpB. tmRNA is encoded by the ssrA gene; the 2 termini fold to resemble tRNA(Ala) and it encodes a 'tag peptide', a short internal open reading frame. During trans-translation Ala-aminoacylated tmRNA acts like a tRNA, entering the A-site of stalled ribosomes, displacing the stalled mRNA. The ribosome then switches to translate the ORF on the tmRNA; the nascent peptide is terminated with the 'tag peptide' encoded by the tmRNA and targeted for degradation. The ribosome is freed to recommence translation, which seems to be the essential function of trans-translation. The sequence is that of SsrA-binding protein from Coxiella burnetii (strain CbuG_Q212) (Coxiella burnetii (strain Q212)).